The following is a 387-amino-acid chain: Early growth response protein 3 (387 aa).

A disordered region spans residues 241 to 283 (PGFGSLPQPPLTLKPIRPRKYPNRPSKTPLHERPHACPAEGCD). A compositionally biased stretch (basic and acidic residues) spans 269–283 (PLHERPHACPAEGCD). C2H2-type zinc fingers lie at residues 275–299 (HACPAEGCDRRFSRSDELTRHLRIH), 305–327 (FQCRICMRSFSRSDHLTTHIRTH), and 333–355 (FACEFCGRKFARSDERKRHAKIH). The disordered stretch occupies residues 348–387 (RKRHAKIHLKQKEKKSEKGGAPSASSAPTVSLAPVVTTCA). Basic residues predominate over residues 350-360 (RHAKIHLKQKE).

Belongs to the EGR C2H2-type zinc-finger protein family.

It is found in the nucleus. Functionally, probable transcription factor involved in muscle spindle development. In Mus musculus (Mouse), this protein is Early growth response protein 3 (Egr3).